The sequence spans 386 residues: MGKAIHFGGGNIGRGFVGEFLHEAGYEVVFVDVVDDLITSIQNTPSYEITEISEDGEKTKKITNYRALNSKSHEADVVQEIATADIVTCAVGPRVLQFIAPVIAKGLESRNVSTPLTVIACENAINATDTLRGHIEKKTKPEIISERAVFANCAIDRIVPNQPPNNGLNVRIEKYWEWVVEQTPFKEKGVAHPNVSAIHWVDKLDPYIERKLFTVNTGHATTAYYGHLAGKKTIADALHDPKIRENVHKVLDETASLIINKHGISEQEQKEYVDKIISRISNPYLEDGVERVGRAPLRKLSRNERFIGPASQLAERGLKFDALLGAIEQALRFQNVEGDEESKELAKILKEKTAEEATSELTELEKDHPLYSHVLERVRTVQQESK.

4-15 (AIHFGGGNIGRG) is a binding site for NAD(+). Lys211 is a catalytic residue.

This sequence belongs to the mannitol dehydrogenase family. As to quaternary structure, monomer.

The enzyme catalyses D-mannitol 1-phosphate + NAD(+) = beta-D-fructose 6-phosphate + NADH + H(+). Functionally, catalyzes the NAD(H)-dependent interconversion of D-fructose 6-phosphate and D-mannitol 1-phosphate in the mannitol metabolic pathway. This is Mannitol-1-phosphate 5-dehydrogenase (mpdA) from Emericella nidulans (strain FGSC A4 / ATCC 38163 / CBS 112.46 / NRRL 194 / M139) (Aspergillus nidulans).